Here is a 462-residue protein sequence, read N- to C-terminus: Siroheme synthase (462 aa).

The interval 1 to 203 (MQYFPIFVDT…GNNSKAEQMM (203 aa)) is precorrin-2 dehydrogenase /sirohydrochlorin ferrochelatase. NAD(+) is bound by residues 22 to 23 (EV) and 43 to 44 (PW). Position 128 is a phosphoserine (serine 128). The segment at 217–462 (GEVYLVGAGP…EKLNWFGADA (246 aa)) is uroporphyrinogen-III C-methyltransferase. Proline 226 contacts S-adenosyl-L-methionine. Aspartate 249 functions as the Proton acceptor in the catalytic mechanism. Lysine 271 (proton donor) is an active-site residue. S-adenosyl-L-methionine is bound by residues 302 to 304 (GGD), isoleucine 307, 332 to 333 (TA), methionine 384, and alanine 413.

In the N-terminal section; belongs to the precorrin-2 dehydrogenase / sirohydrochlorin ferrochelatase family. This sequence in the C-terminal section; belongs to the precorrin methyltransferase family.

It catalyses the reaction uroporphyrinogen III + 2 S-adenosyl-L-methionine = precorrin-2 + 2 S-adenosyl-L-homocysteine + H(+). It carries out the reaction precorrin-2 + NAD(+) = sirohydrochlorin + NADH + 2 H(+). The enzyme catalyses siroheme + 2 H(+) = sirohydrochlorin + Fe(2+). Its pathway is cofactor biosynthesis; adenosylcobalamin biosynthesis; precorrin-2 from uroporphyrinogen III: step 1/1. It participates in cofactor biosynthesis; adenosylcobalamin biosynthesis; sirohydrochlorin from precorrin-2: step 1/1. It functions in the pathway porphyrin-containing compound metabolism; siroheme biosynthesis; precorrin-2 from uroporphyrinogen III: step 1/1. The protein operates within porphyrin-containing compound metabolism; siroheme biosynthesis; siroheme from sirohydrochlorin: step 1/1. Its pathway is porphyrin-containing compound metabolism; siroheme biosynthesis; sirohydrochlorin from precorrin-2: step 1/1. In terms of biological role, multifunctional enzyme that catalyzes the SAM-dependent methylations of uroporphyrinogen III at position C-2 and C-7 to form precorrin-2 via precorrin-1. Then it catalyzes the NAD-dependent ring dehydrogenation of precorrin-2 to yield sirohydrochlorin. Finally, it catalyzes the ferrochelation of sirohydrochlorin to yield siroheme. This chain is Siroheme synthase, found in Pseudoalteromonas atlantica (strain T6c / ATCC BAA-1087).